A 354-amino-acid polypeptide reads, in one-letter code: Guanine nucleotide-binding protein G(o) subunit alpha (354 aa).

Gly2 carries N-myristoyl glycine lipidation. Cys3 carries the S-palmitoyl cysteine lipid modification. A G-alpha domain is found at 32-354; it reads KDIKLLLLGA…ANNLRGCGLY (323 aa). Residues 35–48 form a G1 motif region; the sequence is KLLLLGAGESGKST. GTP-binding positions include 40 to 47, 176 to 182, 201 to 205, 270 to 273, and Ala326; these read GAGESGKS, LRTRVKT, DVGGQ, and NKKD. The Mg(2+) site is built by Ser47 and Thr182. Residues 174–182 are G2 motif; sequence DILRTRVKT. Residues 197 to 206 are G3 motif; the sequence is FKLFDVGGQR. The segment at 266-273 is G4 motif; sequence ILFLNKKD. The G5 motif stretch occupies residues 324–329; that stretch reads TCATDT.

The protein belongs to the G-alpha family. G(i/o/t/z) subfamily. G proteins are composed of 3 units; alpha, beta and gamma. The alpha chain contains the guanine nucleotide binding site.

In terms of biological role, guanine nucleotide-binding proteins (G proteins) are involved as modulators or transducers in various transmembrane signaling systems. The G(o) protein function is not clear. The chain is Guanine nucleotide-binding protein G(o) subunit alpha from Lymnaea stagnalis (Great pond snail).